The chain runs to 150 residues: Meiotic expression up-regulated protein 15 (150 aa).

The protein is Meiotic expression up-regulated protein 15 (meu15) of Schizosaccharomyces pombe (strain 972 / ATCC 24843) (Fission yeast).